The following is a 284-amino-acid chain: NAD kinase (284 aa).

D61 (proton acceptor) is an active-site residue. NAD(+) is bound by residues 61–62 (DG), R66, 136–137 (ND), R147, K164, D166, and L201.

The protein belongs to the NAD kinase family. The cofactor is a divalent metal cation.

It localises to the cytoplasm. It catalyses the reaction NAD(+) + ATP = ADP + NADP(+) + H(+). Its function is as follows. Involved in the regulation of the intracellular balance of NAD and NADP, and is a key enzyme in the biosynthesis of NADP. Catalyzes specifically the phosphorylation on 2'-hydroxyl of the adenosine moiety of NAD to yield NADP. The protein is NAD kinase of Dehalococcoides mccartyi (strain ATCC BAA-2100 / JCM 16839 / KCTC 5957 / BAV1).